We begin with the raw amino-acid sequence, 311 residues long: MDYRHDLIIKLYDALIKNGFNVSEPDLYGLVTFDLICRRNDEKYIIKVLYNIDTFSRLSISSLMAMASVTKSSIIVIGEKSGSGRLEDGILYYRHHIPIMSFKTFIDYINGESPYIYSAPGGYYVSIDGDKMRRIRELKGYSVGYLSSKLGISRRSISLYESGSSATIDIYLKLEETLGEDLTKDIDIRNEKYDYNIKDDIKDVFIRETFQMLSALGYSYEYIKKSPFDGFSYDPETMFMLGIFNNYMENERIISIKKISQVLNNIPLIIQKEYTEKENIYGCPVVSISELRSMGSMYAFKKLVEKRYSYD.

An HTH cro/C1-type domain is found at methionine 132–isoleucine 186. Positions valine 143–serine 162 form a DNA-binding region, H-T-H motif.

The chain is Putative HTH-type transcriptional regulatory protein PTO0557 from Picrophilus torridus (strain ATCC 700027 / DSM 9790 / JCM 10055 / NBRC 100828 / KAW 2/3).